The following is a 189-amino-acid chain: Thymidine kinase (189 aa).

Residues 9 to 16 (GTMNSGKS) and 85 to 88 (DEAQ) each bind ATP. Glutamate 86 serves as the catalytic Proton acceptor. Zn(2+) contacts are provided by cysteine 143, cysteine 146, cysteine 180, and histidine 183.

Belongs to the thymidine kinase family. Homotetramer.

The protein resides in the cytoplasm. The catalysed reaction is thymidine + ATP = dTMP + ADP + H(+). The sequence is that of Thymidine kinase from Lactococcus lactis subsp. lactis (strain IL1403) (Streptococcus lactis).